Consider the following 1476-residue polypeptide: Membrane-associated guanylate kinase, WW and PDZ domain-containing protein 3 (1476 aa).

The region spanning 18–108 is the PDZ 1 domain; that stretch reads CAVSWAGPPG…PIRLKTVKPG (91 aa). An interaction with ADRB1 and TGFA region spans residues 18-108; the sequence is CAVSWAGPPG…PIRLKTVKPG (91 aa). Positions 116-290 constitute a Guanylate kinase-like domain; it reads RHYLSLQFQK…SSMDFRNYMM (175 aa). 123–130 is a binding site for ATP; sequence FQKGSIDH. The disordered stretch occupies residues 184 to 266; that stretch reads TYDGNFYGTP…ETREMHSETS (83 aa). A compositionally biased stretch (pro residues) spans 193–204; it reads PKPPAEPSPFQP. Position 236 is a phosphoserine (Ser236). Acidic residues predominate over residues 238 to 247; that stretch reads LPEEEEDEDK. WW domains lie at 296–329 and 342–375; these read EPLP…DPRL and GELP…NPVE. Residues 413–495 form the PDZ 2 domain; that stretch reads RASLKKSTMG…NQYVNLTLCR (83 aa). The interaction with PTEN stretch occupies residues 413-495; the sequence is RASLKKSTMG…NQYVNLTLCR (83 aa). The disordered stretch occupies residues 551-575; sequence LASDRLNGPSESSEQRASLASSGSS. The segment covering 559-575 has biased composition (polar residues); it reads PSESSEQRASLASSGSS. The region spanning 581 to 657 is the PDZ 3 domain; sequence TIPLIKGPKG…GADVPLLILR (77 aa). Ser598 carries the phosphoserine modification. Residues 664 to 691 form a disordered region; sequence TKTAKTKTDTKENSGSLETINEPIPQPM. At Ser702 the chain carries Phosphoserine. Residues 729–811 form the PDZ 4 domain; that stretch reads DVFLRKQESG…NGHVLLTVRR (83 aa). The tract at residues 729–811 is interaction with ADGRB1; that stretch reads DVFLRKQESG…NGHVLLTVRR (83 aa). Residues 818 to 844 form a disordered region; the sequence is KQPEDESHQAFSQNGSPRLNRAELPTR. Ser833 and Ser916 each carry phosphoserine. Residues 852–939 enclose the PDZ 5 domain; that stretch reads DVTLQRKENE…TVTLTVVAEE (88 aa). Residues 852–939 are interaction with LPAR2 and GRIN2B; the sequence is DVTLQRKENE…TVTLTVVAEE (88 aa). Positions 939-966 are disordered; that stretch reads EEHHGPPSGTNSARQSPALQHRPMGQAQ. A compositionally biased stretch (polar residues) spans 946–956; sequence SGTNSARQSPA. The PDZ 6 domain occupies 1022-1104; the sequence is PVELERGPRG…KVLLLLRPGT (83 aa). Disordered regions lie at residues 1109–1151 and 1168–1476; these read DHGD…ATED and TVQE…DKQL. A compositionally biased stretch (polar residues) spans 1114 to 1123; that stretch reads DTNSPSSSNV. 2 stretches are compositionally biased toward basic and acidic residues: residues 1193 to 1211 and 1230 to 1265; these read SKKD…RLKG and RHSE…ESKG. Polar residues predominate over residues 1285-1304; the sequence is SSSPKKQQKIGGNSLSNTEG. Basic and acidic residues-rich tracts occupy residues 1317–1340 and 1350–1361; these read HPRD…KDLK and KSPEKKSSKVDE. Ser1321 carries the post-translational modification Phosphoserine. A compositionally biased stretch (polar residues) spans 1363-1373; it reads SLPSKKTSSTA. Residues 1419–1437 show a composition bias toward basic and acidic residues; the sequence is ADDHKGRESEVTDRCRERA.

The protein belongs to the MAGUK family. As to quaternary structure, interacts with ADRB1, ADGRB1, LPAR2/EDG4, GRIN2B, PTEN, and PTPRB. Interacts with unidentified tyrosine phosphorylated proteins. Interacts with FZD4, FZD7, TGFA and VANGL2. Interacts with DLL1. Interacts with PRRG4 (via cytoplasmic domain). In terms of tissue distribution, widely expressed. Colocalizes with TGFA in neurons in the cortex and dentate gyrus, as well as in ependymal cells and some astrocytes (at protein level). Present in lens epithelium.

It localises to the cell membrane. The protein resides in the cell junction. Its subcellular location is the tight junction. The protein localises to the nucleus. In terms of biological role, acts as a scaffolding protein at cell-cell junctions, thereby regulating various cellular and signaling processes. Cooperates with PTEN to modulate the kinase activity of AKT1. Its interaction with PTPRB and tyrosine phosphorylated proteins suggests that it may link receptor tyrosine phosphatase with its substrates at the plasma membrane. In polarized epithelial cells, involved in efficient trafficking of TGFA to the cell surface. Regulates the ability of LPAR2 to activate ERK and RhoA pathways. Regulates the JNK signaling cascade via its interaction with FZD4 and VANGL2. The chain is Membrane-associated guanylate kinase, WW and PDZ domain-containing protein 3 (Magi3) from Mus musculus (Mouse).